The chain runs to 166 residues: MTPVEEIIKKDIFRETPLRYLGYANEVGEAFRSLVKPVVVKFSYVVAFGYVAADSIDKGLQEYIKTHSTSTEKTKKVAIAAVDTVLWQTFASVLIPGFTINRFCFFSNLLLQKSTKLPTNMRKWTVTCLGLATIPFIVHPIDSFVEEAMDKTARKIYNEPTISNKE.

The next 3 membrane-spanning stretches (helical) occupy residues 33 to 53, 78 to 98, and 125 to 145; these read SLVK…YVAA, AIAA…IPGF, and TVTC…DSFV.

Belongs to the MTFP1 family.

It is found in the mitochondrion inner membrane. Involved in the mitochondrial division probably by regulating membrane fission. Loss-of-function leads to apoptosis. This chain is Mitochondrial fission process protein 1 (mtp-18), found in Caenorhabditis elegans.